Reading from the N-terminus, the 230-residue chain is Lipopolysaccharide core heptose(II) kinase WaaY (230 aa).

Belongs to the protein kinase superfamily. RfaY/WaaY family.

It carries out the reaction alpha-D-Glc-(1-&gt;3)-[L-alpha-D-Hep-(1-&gt;7)]-L-alpha-D-Hep-(1-&gt;3)-4-O-PO3(2-)-L-alpha-D-Hep-(1-&gt;5)-[alpha-Kdo-(2-&gt;4)]-alpha-Kdo-(2-&gt;6)-lipid A + ATP = alpha-D-Glc-(1-&gt;3)-[L-alpha-D-Hep-(1-&gt;7)]-4-O-PO3(2-)-L-alpha-D-Hep-(1-&gt;3)-4-O-PO3(2-)-L-alpha-D-Hep-(1-&gt;5)-[alpha-Kdo-(2-&gt;4)]-alpha-Kdo-(2-&gt;6)-lipid A + ADP + H(+). The protein operates within bacterial outer membrane biogenesis; LPS core biosynthesis. In terms of biological role, kinase involved in the biosynthesis of the core oligosaccharide region of lipopolysaccharide (LPS). Catalyzes the phosphorylation of the second heptose unit (HepII) of the inner core. The protein is Lipopolysaccharide core heptose(II) kinase WaaY of Escherichia coli.